We begin with the raw amino-acid sequence, 395 residues long: Flap endonuclease 1 (395 aa).

The N-domain stretch occupies residues 1-104 (MGIKHLYQVI…GELAKRSARK (104 aa)). D34 serves as a coordination point for Mg(2+). Residues R47 and R70 each contribute to the DNA site. D86 contributes to the Mg(2+) binding site. Residues 94 to 124 (GGELAKRSARKREAHEAHEEAKETGTAEDME) form a disordered region. Residues 122–253 (DMEKFSRRTV…NTALKLIREH (132 aa)) form an I-domain region. Positions 158, 160, 179, and 181 each coordinate Mg(2+). E158 contributes to the DNA binding site. Positions 231 and 233 each coordinate DNA. Position 233 (D233) interacts with Mg(2+). The tract at residues 341–349 (QQSRLEGFF) is interaction with PCNA. The span at 356–389 (DAEKASMKRKHDEKIEEQKKRKKEDAKAKKEAKA) shows a compositional bias: basic and acidic residues. The disordered stretch occupies residues 356–395 (DAEKASMKRKHDEKIEEQKKRKKEDAKAKKEAKARPRGAV).

This sequence belongs to the XPG/RAD2 endonuclease family. FEN1 subfamily. As to quaternary structure, interacts with PCNA. Three molecules of fen1 bind to one PCNA trimer with each molecule binding to one PCNA monomer. PCNA stimulates the nuclease activity without altering cleavage specificity. Requires Mg(2+) as cofactor. In terms of processing, phosphorylated. Phosphorylation upon DNA damage induces relocalization to the nuclear plasma.

The protein resides in the nucleus. It localises to the nucleolus. Its subcellular location is the nucleoplasm. It is found in the mitochondrion. Structure-specific nuclease with 5'-flap endonuclease and 5'-3' exonuclease activities involved in DNA replication and repair. During DNA replication, cleaves the 5'-overhanging flap structure that is generated by displacement synthesis when DNA polymerase encounters the 5'-end of a downstream Okazaki fragment. It enters the flap from the 5'-end and then tracks to cleave the flap base, leaving a nick for ligation. Also involved in the long patch base excision repair (LP-BER) pathway, by cleaving within the apurinic/apyrimidinic (AP) site-terminated flap. Acts as a genome stabilization factor that prevents flaps from equilibrating into structures that lead to duplications and deletions. Also possesses 5'-3' exonuclease activity on nicked or gapped double-stranded DNA, and exhibits RNase H activity. Also involved in replication and repair of rDNA and in repairing mitochondrial DNA. The sequence is that of Flap endonuclease 1 (fen1) from Talaromyces marneffei (strain ATCC 18224 / CBS 334.59 / QM 7333) (Penicillium marneffei).